A 23-amino-acid polypeptide reads, in one-letter code: Superoxide dismutase [Mn], mitochondrial (23 aa).

This sequence belongs to the iron/manganese superoxide dismutase family. In terms of assembly, homotetramer. Mn(2+) is required as a cofactor.

Its subcellular location is the mitochondrion matrix. It carries out the reaction 2 superoxide + 2 H(+) = H2O2 + O2. Functionally, destroys superoxide anion radicals which are normally produced within the cells and which are toxic to biological systems. This Aquarana catesbeiana (American bullfrog) protein is Superoxide dismutase [Mn], mitochondrial.